The following is a 173-amino-acid chain: Skp-like protein (173 aa).

The N-terminal stretch at 1-19 (MKKFLLLSLMSLASSTVFA) is a signal peptide.

The protein belongs to the Skp family.

The protein is Skp-like protein of Chlamydia muridarum (strain MoPn / Nigg).